The chain runs to 391 residues: Phosphoprotein (391 aa).

Residues Thr10 and Thr16 each carry the phosphothreonine modification. Residues 54-65 (QKNIQHPTASHQ) are compositionally biased toward polar residues. 2 disordered regions span residues 54–97 (QKNI…PEPL) and 148–185 (PVTE…ERSG). Phosphoserine is present on Ser69. Residues Thr91, Thr150, and Thr165 each carry the phosphothreonine modification. Residue Ser188 is modified to Phosphoserine. Residues 216–279 (ISANEIMDLL…MATVKIMDPG (64 aa)) form a multimerization region. A coiled-coil region spans residues 218-245 (ANEIMDLLRGMDARLQHLEQKVDKVLAQ). A Phosphothreonine modification is found at Thr250. Phosphoserine is present on Ser257. Thr258 and Thr282 each carry phosphothreonine. Phosphoserine occurs at positions 292 and 294. Thr298 is modified (phosphothreonine). Phosphoserine occurs at positions 301 and 374. Residues 343-391 (AGRKVMITKMITDCVANPQMKQAFEQRLAKASTEDALNDIKRDIIRSAI) are interaction with the nucleoprotein. Thr375 carries the phosphothreonine modification.

Belongs to the rubulavirus/avulavirus P protein family. Homotetramer. Interacts (via multimerization domain) with polymerase L; this interaction forms the polymerase L-P complex. Interacts (via N-terminus) with N0 (via Ncore); this interaction allows P to chaperon N0 to avoid N polymerization before encapsidation. Interacts (via C-terminus) with N-RNA template; this interaction positions the polymerase on the template for both transcription and replication. Interacts with host RPS6KB1 kinase; this interaction may play a role in the viral replication and transcription.

Functionally, essential cofactor of the RNA polymerase L that plays a central role in the transcription and replication by forming the polymerase complex with RNA polymerase L and recruiting L to the genomic N-RNA template for RNA synthesis. Also plays a central role in the encapsidation of nascent RNA chains by forming the encapsidation complex with the nucleocapsid protein N (N-P complex). Acts as a chaperone for newly synthesized free N protein, so-called N0, allowing encapsidation of nascent RNA chains during replication. The nucleoprotein protein N prevents excessive phosphorylation of P, which leads to down-regulation of viral transcription/ replication. Participates, together with N, in the formation of viral factories (viroplasms), which are large inclusions in the host cytoplasm where replication takes place. This chain is Phosphoprotein (P/V), found in Homo sapiens (Human).